We begin with the raw amino-acid sequence, 237 residues long: Sugar fermentation stimulation protein homolog (237 aa).

The protein belongs to the SfsA family.

The sequence is that of Sugar fermentation stimulation protein homolog from Pseudomonas putida (strain W619).